The chain runs to 78 residues: Exodeoxyribonuclease 7 small subunit (78 aa).

This sequence belongs to the XseB family. Heterooligomer composed of large and small subunits.

The protein resides in the cytoplasm. The catalysed reaction is Exonucleolytic cleavage in either 5'- to 3'- or 3'- to 5'-direction to yield nucleoside 5'-phosphates.. Functionally, bidirectionally degrades single-stranded DNA into large acid-insoluble oligonucleotides, which are then degraded further into small acid-soluble oligonucleotides. The protein is Exodeoxyribonuclease 7 small subunit of Cutibacterium acnes (strain DSM 16379 / KPA171202) (Propionibacterium acnes).